We begin with the raw amino-acid sequence, 338 residues long: Anthranilate phosphoribosyltransferase (338 aa).

5-phospho-alpha-D-ribose 1-diphosphate is bound by residues G81, 84–85 (GD), T89, 91–94 (NIST), 109–117 (KHGNRNLSS), and A121. G81 contributes to the anthranilate binding site. S93 lines the Mg(2+) pocket. Anthranilate is bound at residue N112. Position 167 (R167) interacts with anthranilate. Positions 226 and 227 each coordinate Mg(2+).

The protein belongs to the anthranilate phosphoribosyltransferase family. As to quaternary structure, homodimer. It depends on Mg(2+) as a cofactor.

The enzyme catalyses N-(5-phospho-beta-D-ribosyl)anthranilate + diphosphate = 5-phospho-alpha-D-ribose 1-diphosphate + anthranilate. It participates in amino-acid biosynthesis; L-tryptophan biosynthesis; L-tryptophan from chorismate: step 2/5. Catalyzes the transfer of the phosphoribosyl group of 5-phosphorylribose-1-pyrophosphate (PRPP) to anthranilate to yield N-(5'-phosphoribosyl)-anthranilate (PRA). The chain is Anthranilate phosphoribosyltransferase from Cereibacter sphaeroides (strain ATCC 17029 / ATH 2.4.9) (Rhodobacter sphaeroides).